A 375-amino-acid chain; its full sequence is DNA replication and repair protein RecF (375 aa).

30–37 (GENAQGKT) provides a ligand contact to ATP.

It belongs to the RecF family.

The protein localises to the cytoplasm. Functionally, the RecF protein is involved in DNA metabolism; it is required for DNA replication and normal SOS inducibility. RecF binds preferentially to single-stranded, linear DNA. It also seems to bind ATP. This is DNA replication and repair protein RecF from Bacillus cereus (strain B4264).